Consider the following 449-residue polypeptide: Protein king tubby (449 aa).

The disordered stretch occupies residues 123–197 (SAVHSANSTQ…GTGGESEGDV (75 aa)). The span at 124 to 145 (AVHSANSTQSQRPRPRQHSFSD) shows a compositional bias: polar residues. Ser-142 carries the post-translational modification Phosphoserine. Over residues 154-166 (NRNVAAAAPVRPA) the composition is skewed to low complexity. Residues 183–192 (NGTGNGTGGE) are compositionally biased toward gly residues.

It belongs to the TUB family.

It is found in the cytoplasm. The protein localises to the nucleus. Its subcellular location is the cell projection. The protein resides in the cilium membrane. It localises to the rhabdomere. In Drosophila ananassae (Fruit fly), this protein is Protein king tubby.